The chain runs to 178 residues: Peptide methionine sulfoxide reductase MsrA (178 aa).

Cys-14 is a catalytic residue.

Belongs to the MsrA Met sulfoxide reductase family.

The catalysed reaction is L-methionyl-[protein] + [thioredoxin]-disulfide + H2O = L-methionyl-(S)-S-oxide-[protein] + [thioredoxin]-dithiol. The enzyme catalyses [thioredoxin]-disulfide + L-methionine + H2O = L-methionine (S)-S-oxide + [thioredoxin]-dithiol. Functionally, has an important function as a repair enzyme for proteins that have been inactivated by oxidation. Catalyzes the reversible oxidation-reduction of methionine sulfoxide in proteins to methionine. This is Peptide methionine sulfoxide reductase MsrA from Bacillus pumilus (strain SAFR-032).